We begin with the raw amino-acid sequence, 390 residues long: Zinc finger CCCH domain-containing protein 46 (390 aa).

The C3H1-type zinc-finger motif lies at 2–29; that stretch reads SRRQEICRNFQRGSCKYGAQCRYLHASP. Residues 27-129 form a disordered region; the sequence is ASPHQQQQQQ…AAHTSCEDPQ (103 aa). The span at 48–76 shows a compositional bias: low complexity; sequence GSRQQQQPSFGSQFQQQQQQQQKPNPFGF. Over residues 106–129 the composition is skewed to polar residues; the sequence is PTKQTEAVQPPQAQAAHTSCEDPQ. Positions 146–211 are required for transcriptional activation activity; sequence WKLTCYAHLR…FTNLLNSARP (66 aa). A compositionally biased stretch (polar residues) spans 230–248; the sequence is SSFGASQTNGPPVFSSFSQ. Positions 230 to 284 are disordered; the sequence is SSFGASQTNGPPVFSSFSQIGAATNIGPGPGTTAPGMPASSPFGHPSSAPLAAPT. The span at 250–268 shows a compositional bias: low complexity; the sequence is GAATNIGPGPGTTAPGMPA.

In terms of assembly, interacts with GSK1 and GSK4. Phosphorylated on serine and threonine residues by GSK1. Phosphorylation represses nuclear localization. In terms of tissue distribution, expressed in the adaxial face of the collar, nodes and the basal region of elongating internodes.

The protein localises to the nucleus. It localises to the cytoplasm. Its function is as follows. Transcriptional activator that binds double-stranded DNA and the single-stranded RNA polymers poly(rA), poly(rU) and poly(rG), but not poly(rC). Mediates optimal plant architecture through brassinosteroid (BR) signaling. May act as a negative regulator in sterol homeostasis. Acts as a negative regulator of BR signaling. Binds to the specific DNA sequence 5'-CTCGC-3' of BZR1 promoter and negatively regulates BZR1. Acts as an antagonistic transcription factor of BZR1 to attenuate the BR signaling pathway and regulate leaf bending. Represses the expression of ILI1, and activates that of IBH1 to balance the regulation activity of BZR1. This Oryza sativa subsp. japonica (Rice) protein is Zinc finger CCCH domain-containing protein 46.